Reading from the N-terminus, the 260-residue chain is 1-(5-phosphoribosyl)-5-[(5-phosphoribosylamino)methylideneamino] imidazole-4-carboxamide isomerase (260 aa).

The active-site Proton acceptor is the D8. The active-site Proton donor is D130.

This sequence belongs to the HisA/HisF family.

It is found in the cytoplasm. It carries out the reaction 1-(5-phospho-beta-D-ribosyl)-5-[(5-phospho-beta-D-ribosylamino)methylideneamino]imidazole-4-carboxamide = 5-[(5-phospho-1-deoxy-D-ribulos-1-ylimino)methylamino]-1-(5-phospho-beta-D-ribosyl)imidazole-4-carboxamide. The protein operates within amino-acid biosynthesis; L-histidine biosynthesis; L-histidine from 5-phospho-alpha-D-ribose 1-diphosphate: step 4/9. The sequence is that of 1-(5-phosphoribosyl)-5-[(5-phosphoribosylamino)methylideneamino] imidazole-4-carboxamide isomerase from Chlorobaculum tepidum (strain ATCC 49652 / DSM 12025 / NBRC 103806 / TLS) (Chlorobium tepidum).